Reading from the N-terminus, the 338-residue chain is 1-aminocyclopropane-1-carboxylate deaminase (338 aa).

K51 bears the N6-(pyridoxal phosphate)lysine mark. S78 functions as the Nucleophile in the catalytic mechanism.

The protein belongs to the ACC deaminase/D-cysteine desulfhydrase family. In terms of assembly, homotrimer. Pyridoxal 5'-phosphate serves as cofactor.

It catalyses the reaction 1-aminocyclopropane-1-carboxylate + H2O = 2-oxobutanoate + NH4(+). Catalyzes a cyclopropane ring-opening reaction, the irreversible conversion of 1-aminocyclopropane-1-carboxylate (ACC) to ammonia and alpha-ketobutyrate. Allows growth on ACC as a nitrogen source. This is 1-aminocyclopropane-1-carboxylate deaminase from Burkholderia lata (strain ATCC 17760 / DSM 23089 / LMG 22485 / NCIMB 9086 / R18194 / 383).